The following is a 239-amino-acid chain: tRNA (guanine-N(7)-)-methyltransferase (239 aa).

The S-adenosyl-L-methionine site is built by Glu-68, Glu-93, Asp-120, and Asp-143. Asp-143 is a catalytic residue. Substrate-binding positions include Lys-147, Asp-180, and 217 to 220; that span reads TKFE.

It belongs to the class I-like SAM-binding methyltransferase superfamily. TrmB family.

It carries out the reaction guanosine(46) in tRNA + S-adenosyl-L-methionine = N(7)-methylguanosine(46) in tRNA + S-adenosyl-L-homocysteine. It functions in the pathway tRNA modification; N(7)-methylguanine-tRNA biosynthesis. Its function is as follows. Catalyzes the formation of N(7)-methylguanine at position 46 (m7G46) in tRNA. This is tRNA (guanine-N(7)-)-methyltransferase from Vibrio cholerae serotype O1 (strain ATCC 39315 / El Tor Inaba N16961).